Here is a 146-residue protein sequence, read N- to C-terminus: Flagellar assembly factor FliW 1 (146 aa).

It belongs to the FliW family. In terms of assembly, interacts with translational regulator CsrA and flagellin(s).

It localises to the cytoplasm. Acts as an anti-CsrA protein, binds CsrA and prevents it from repressing translation of its target genes, one of which is flagellin. Binds to flagellin and participates in the assembly of the flagellum. The polypeptide is Flagellar assembly factor FliW 1 (Helicobacter hepaticus (strain ATCC 51449 / 3B1)).